The chain runs to 719 residues: Photosystem I P700 chlorophyll a apoprotein A1 (719 aa).

The next 8 membrane-spanning stretches (helical) occupy residues 61–84 (VFSA…FHGA), 147–170 (LYCT…FHYH), 186–210 (LNHH…HVSL), 282–300 (TAHH…GHMY), 337–360 (WHAQ…HHMY), 376–402 (LSLF…IFMV), 424–446 (AIVS…LYIH), and 522–540 (FLVH…LILL). Cysteine 564 and cysteine 573 together coordinate [4Fe-4S] cluster. 2 helical membrane-spanning segments follow: residues 580–601 (HVFL…HFSW) and 655–677 (LSAY…MFLF). Position 666 (histidine 666) interacts with chlorophyll a'. Residues methionine 674 and tyrosine 682 each coordinate chlorophyll a. A phylloquinone-binding site is contributed by tryptophan 683. A helical membrane pass occupies residues 715–719 (AVGVA).

It belongs to the PsaA/PsaB family. As to quaternary structure, the PsaA/B heterodimer binds the P700 chlorophyll special pair and subsequent electron acceptors. PSI consists of a core antenna complex that captures photons, and an electron transfer chain that converts photonic excitation into a charge separation. The eukaryotic PSI reaction center is composed of at least 11 subunits. The cofactor is P700 is a chlorophyll a/chlorophyll a' dimer, A0 is one or more chlorophyll a, A1 is one or both phylloquinones and FX is a shared 4Fe-4S iron-sulfur center..

It is found in the plastid. Its subcellular location is the chloroplast thylakoid membrane. The catalysed reaction is reduced [plastocyanin] + hnu + oxidized [2Fe-2S]-[ferredoxin] = oxidized [plastocyanin] + reduced [2Fe-2S]-[ferredoxin]. Functionally, psaA and PsaB bind P700, the primary electron donor of photosystem I (PSI), as well as the electron acceptors A0, A1 and FX. PSI is a plastocyanin-ferredoxin oxidoreductase, converting photonic excitation into a charge separation, which transfers an electron from the donor P700 chlorophyll pair to the spectroscopically characterized acceptors A0, A1, FX, FA and FB in turn. Oxidized P700 is reduced on the lumenal side of the thylakoid membrane by plastocyanin. This Torreya californica (California nutmeg) protein is Photosystem I P700 chlorophyll a apoprotein A1.